A 132-amino-acid chain; its full sequence is ATP synthase epsilon chain (132 aa).

It belongs to the ATPase epsilon chain family. In terms of assembly, F-type ATPases have 2 components, CF(1) - the catalytic core - and CF(0) - the membrane proton channel. CF(1) has five subunits: alpha(3), beta(3), gamma(1), delta(1), epsilon(1). CF(0) has three main subunits: a, b and c.

It localises to the cell membrane. Produces ATP from ADP in the presence of a proton gradient across the membrane. In Bacillus sp. (strain PS3), this protein is ATP synthase epsilon chain (atpC).